A 277-amino-acid chain; its full sequence is Large ribosomal subunit protein uL2 (277 aa).

Residues 219–277 (TVRGSVMNPNDHPHGGGEGRSPIGHPSPRTPWGKPALGYKTRKNKKYSDRFIVKRRHDK) form a disordered region.

Belongs to the universal ribosomal protein uL2 family. In terms of assembly, part of the 50S ribosomal subunit. Forms a bridge to the 30S subunit in the 70S ribosome.

Its function is as follows. One of the primary rRNA binding proteins. Required for association of the 30S and 50S subunits to form the 70S ribosome, for tRNA binding and peptide bond formation. It has been suggested to have peptidyltransferase activity; this is somewhat controversial. Makes several contacts with the 16S rRNA in the 70S ribosome. In Clostridium botulinum (strain ATCC 19397 / Type A), this protein is Large ribosomal subunit protein uL2.